Consider the following 250-residue polypeptide: Histone H1.1 (250 aa).

The segment covering 1 to 11 (MSDSAVATSAS) has biased composition (polar residues). Disordered stretches follow at residues 1–52 (MSDS…QQMV) and 104–250 (QTKG…ATKK). The H15 domain maps to 44–118 (SHPPTQQMVD…GASGSFKLSA (75 aa)). Positions 122–133 (KDAKPKASAVEK) are enriched in basic and acidic residues. Residues 140 to 161 (ASAARATKSKSSTSTTKKAAGA) show a composition bias toward low complexity. Basic and acidic residues predominate over residues 174–191 (KNVEKKKADKEKAKDAKK). The segment covering 192-234 (TGTIKAKPTTAKAKSSATKPKTPKPKTTSAKPKKVVSATTPKK) has biased composition (low complexity). Residues 235–250 (TAVKKPKAKTASATKK) are compositionally biased toward basic residues.

Belongs to the histone H1/H5 family.

The protein resides in the nucleus. Its subcellular location is the chromosome. Histones H1 are necessary for the condensation of nucleosome chains into higher-order structures. The chain is Histone H1.1 (His1.1) from Drosophila virilis (Fruit fly).